The chain runs to 418 residues: Gamma-glutamyl phosphate reductase (418 aa).

It belongs to the gamma-glutamyl phosphate reductase family.

The protein resides in the cytoplasm. The enzyme catalyses L-glutamate 5-semialdehyde + phosphate + NADP(+) = L-glutamyl 5-phosphate + NADPH + H(+). Its pathway is amino-acid biosynthesis; L-proline biosynthesis; L-glutamate 5-semialdehyde from L-glutamate: step 2/2. Its function is as follows. Catalyzes the NADPH-dependent reduction of L-glutamate 5-phosphate into L-glutamate 5-semialdehyde and phosphate. The product spontaneously undergoes cyclization to form 1-pyrroline-5-carboxylate. The sequence is that of Gamma-glutamyl phosphate reductase from Dechloromonas aromatica (strain RCB).